The sequence spans 166 residues: Interferon gamma (166 aa).

A signal peptide spans 1-23 (MKYTSYFLALLLCVLLGFSGSYG). Q24 carries the post-translational modification Pyrrolidone carboxylic acid. N-linked (GlcNAc...) asparagine glycosylation is found at N39 and N106.

It belongs to the type II (or gamma) interferon family. In terms of assembly, homodimer. Interacts with IFNGR1 (via extracellular domain); this interaction promotes IFNGR1 dimerization. As to expression, released primarily from activated T lymphocytes.

The protein resides in the secreted. Type II interferon produced by immune cells such as T-cells and NK cells that plays crucial roles in antimicrobial, antiviral, and antitumor responses by activating effector immune cells and enhancing antigen presentation. Primarily signals through the JAK-STAT pathway after interaction with its receptor IFNGR1 to affect gene regulation. Upon IFNG binding, IFNGR1 intracellular domain opens out to allow association of downstream signaling components JAK2, JAK1 and STAT1, leading to STAT1 activation, nuclear translocation and transcription of IFNG-regulated genes. Many of the induced genes are transcription factors such as IRF1 that are able to further drive regulation of a next wave of transcription. Plays a role in class I antigen presentation pathway by inducing a replacement of catalytic proteasome subunits with immunoproteasome subunits. In turn, increases the quantity, quality, and repertoire of peptides for class I MHC loading. Increases the efficiency of peptide generation also by inducing the expression of activator PA28 that associates with the proteasome and alters its proteolytic cleavage preference. Up-regulates as well MHC II complexes on the cell surface by promoting expression of several key molecules such as cathepsins B/CTSB, H/CTSH, and L/CTSL. Participates in the regulation of hematopoietic stem cells during development and under homeostatic conditions by affecting their development, quiescence, and differentiation. This is Interferon gamma (IFNG) from Bubalus bubalis (Domestic water buffalo).